The sequence spans 79 residues: uncharacterized protein (79 aa).

The 51-residue stretch at Glu-10–Glu-60 folds into the SpoVT-AbrB domain.

This is an uncharacterized protein from Archaeoglobus fulgidus (strain ATCC 49558 / DSM 4304 / JCM 9628 / NBRC 100126 / VC-16).